Reading from the N-terminus, the 1230-residue chain is ABC transporter B family member 5 (1230 aa).

6 consecutive transmembrane segments (helical) span residues 27-47 (VLLM…SPLM), 78-98 (LVYL…CWMI), 154-174 (FIQL…RGWL), 177-197 (LVML…AIIV), 253-273 (GFVT…TYAL), and 286-306 (GYTG…SIAL). The ABC transmembrane type-1 1 domain maps to 30–318 (MIVGSIGAIA…ASPCLTAFTA (289 aa)). An ABC transporter 1 domain is found at 353-589 (IELRDVCFSY…HEGAYSQLLR (237 aa)). 388–395 (GESGSGKS) is a binding site for ATP. 3 N-linked (GlcNAc...) asparagine glycosylation sites follow: asparagine 540, asparagine 615, and asparagine 616. The interval 602–621 (ISDGSISSGSSRGNNSTRQD) is disordered. Positions 603-617 (SDGSISSGSSRGNNS) are enriched in low complexity. 2 helical membrane-spanning segments follow: residues 662–682 (ILIL…IFGI) and 707–727 (MIFV…NYLF). Residues 663–950 (LILGTLVGAV…ASSFAPDSSK (288 aa)) enclose the ABC transmembrane type-1 2 domain. A glycan (N-linked (GlcNAc...) asparagine) is linked at asparagine 759. Helical transmembrane passes span 798–818 (IIAF…IPFI), 889–909 (GVGF…CFYV), and 924–944 (VFQV…ASSF). The ABC transporter 2 domain maps to 985–1223 (IELCHISFTY…EGGVYASLVQ (239 aa)). 1020–1027 (GESGSGKS) serves as a coordination point for ATP. Residues asparagine 1074, asparagine 1174, and asparagine 1227 are each glycosylated (N-linked (GlcNAc...) asparagine).

This sequence belongs to the ABC transporter superfamily. ABCB family. Multidrug resistance exporter (TC 3.A.1.201) subfamily.

The protein localises to the membrane. This Arabidopsis thaliana (Mouse-ear cress) protein is ABC transporter B family member 5 (ABCB5).